Reading from the N-terminus, the 780-residue chain is Elongation factor G-2, chloroplastic (780 aa).

Residues 1–79 (MAAESSLRVA…PRRNFSVFAM (79 aa)) constitute a chloroplast transit peptide. The region spanning 91–366 (KDYRNIGIMA…AVVDYLPSPL (276 aa)) is the tr-type G domain. GTP-binding positions include 100–107 (AHIDAGKT), 164–168 (DTPGH), and 218–221 (NKMD).

This sequence belongs to the TRAFAC class translation factor GTPase superfamily. Classic translation factor GTPase family. EF-G/EF-2 subfamily.

It is found in the plastid. The protein resides in the chloroplast. It functions in the pathway protein biosynthesis; polypeptide chain elongation. Chloroplast-localized elongation factor EF-G involved in protein synthesis in plastids. Catalyzes the GTP-dependent ribosomal translocation step during translation elongation. During this step, the ribosome changes from the pre-translocational (PRE) to the post-translocational (POST) state as the newly formed A-site-bound peptidyl-tRNA and P-site-bound deacylated tRNA move to the P and E sites, respectively. Catalyzes the coordinated movement of the two tRNA molecules, the mRNA and conformational changes in the ribosome. The protein is Elongation factor G-2, chloroplastic (fusA2) of Glycine max (Soybean).